Here is a 189-residue protein sequence, read N- to C-terminus: Elongation factor P (189 aa).

It belongs to the elongation factor P family.

The protein localises to the cytoplasm. It functions in the pathway protein biosynthesis; polypeptide chain elongation. Functionally, involved in peptide bond synthesis. Stimulates efficient translation and peptide-bond synthesis on native or reconstituted 70S ribosomes in vitro. Probably functions indirectly by altering the affinity of the ribosome for aminoacyl-tRNA, thus increasing their reactivity as acceptors for peptidyl transferase. This chain is Elongation factor P, found in Sinorhizobium fredii (strain NBRC 101917 / NGR234).